A 285-amino-acid polypeptide reads, in one-letter code: S-methyl-5'-thioadenosine phosphorylase (285 aa).

Phosphate contacts are provided by residues Ser-10, 52–53 (RH), and 85–86 (TA). Met-188 contributes to the substrate binding site. Thr-189 is a binding site for phosphate. 212–214 (DYD) provides a ligand contact to substrate.

This sequence belongs to the PNP/MTAP phosphorylase family. MTAP subfamily. In terms of assembly, homotrimer.

It is found in the cytoplasm. The protein localises to the nucleus. The catalysed reaction is S-methyl-5'-thioadenosine + phosphate = 5-(methylsulfanyl)-alpha-D-ribose 1-phosphate + adenine. The protein operates within amino-acid biosynthesis; L-methionine biosynthesis via salvage pathway; S-methyl-5-thio-alpha-D-ribose 1-phosphate from S-methyl-5'-thioadenosine (phosphorylase route): step 1/1. Functionally, catalyzes the reversible phosphorylation of S-methyl-5'-thioadenosine (MTA) to adenine and 5-methylthioribose-1-phosphate. Involved in the breakdown of MTA, a major by-product of polyamine biosynthesis. Responsible for the first step in the methionine salvage pathway after MTA has been generated from S-adenosylmethionine. Has broad substrate specificity with 6-aminopurine nucleosides as preferred substrates. This chain is S-methyl-5'-thioadenosine phosphorylase, found in Caenorhabditis briggsae.